The primary structure comprises 405 residues: Molybdopterin molybdenumtransferase 2 (405 aa).

It belongs to the MoeA family. Mg(2+) is required as a cofactor.

The catalysed reaction is adenylyl-molybdopterin + molybdate = Mo-molybdopterin + AMP + H(+). It participates in cofactor biosynthesis; molybdopterin biosynthesis. Catalyzes the insertion of molybdate into adenylated molybdopterin with the concomitant release of AMP. This is Molybdopterin molybdenumtransferase 2 (moaE2) from Mycobacterium tuberculosis (strain CDC 1551 / Oshkosh).